Consider the following 39-residue polypeptide: Omega-theraphotoxin-Asp1g (39 aa).

3 disulfide bridges follow: Cys4–Cys25, Cys8–Cys31, and Cys17–Cys36.

This sequence belongs to the neurotoxin 12 (Hwtx-2) family. 06 (TXP1) subfamily. As to expression, expressed by the venom gland.

The protein localises to the secreted. Functionally, inhibits voltage-gated calcium channels (Cav) in rat cerebellar granule cells. Has insecticidal activity. This is Omega-theraphotoxin-Asp1g from Aphonopelma sp. (American tarantula).